The chain runs to 439 residues: Serine--tRNA ligase (439 aa).

242-244 (TAE) provides a ligand contact to L-serine. 273 to 275 (RQE) lines the ATP pocket. Glu-296 contributes to the L-serine binding site. Residue 360-363 (EISS) participates in ATP binding. Ser-396 provides a ligand contact to L-serine.

It belongs to the class-II aminoacyl-tRNA synthetase family. Type-1 seryl-tRNA synthetase subfamily. As to quaternary structure, homodimer. The tRNA molecule binds across the dimer.

It is found in the cytoplasm. It catalyses the reaction tRNA(Ser) + L-serine + ATP = L-seryl-tRNA(Ser) + AMP + diphosphate + H(+). The enzyme catalyses tRNA(Sec) + L-serine + ATP = L-seryl-tRNA(Sec) + AMP + diphosphate + H(+). It participates in aminoacyl-tRNA biosynthesis; selenocysteinyl-tRNA(Sec) biosynthesis; L-seryl-tRNA(Sec) from L-serine and tRNA(Sec): step 1/1. Functionally, catalyzes the attachment of serine to tRNA(Ser). Is also able to aminoacylate tRNA(Sec) with serine, to form the misacylated tRNA L-seryl-tRNA(Sec), which will be further converted into selenocysteinyl-tRNA(Sec). The sequence is that of Serine--tRNA ligase from Oenococcus oeni (strain ATCC BAA-331 / PSU-1).